Consider the following 271-residue polypeptide: Ribosomal RNA small subunit methyltransferase A (271 aa).

S-adenosyl-L-methionine is bound by residues His-11, Leu-13, Gly-38, Glu-58, Asp-86, and Asn-101.

This sequence belongs to the class I-like SAM-binding methyltransferase superfamily. rRNA adenine N(6)-methyltransferase family. RsmA subfamily.

The protein resides in the cytoplasm. The catalysed reaction is adenosine(1518)/adenosine(1519) in 16S rRNA + 4 S-adenosyl-L-methionine = N(6)-dimethyladenosine(1518)/N(6)-dimethyladenosine(1519) in 16S rRNA + 4 S-adenosyl-L-homocysteine + 4 H(+). Specifically dimethylates two adjacent adenosines (A1518 and A1519) in the loop of a conserved hairpin near the 3'-end of 16S rRNA in the 30S particle. May play a critical role in biogenesis of 30S subunits. The sequence is that of Ribosomal RNA small subunit methyltransferase A from Helicobacter acinonychis (strain Sheeba).